The primary structure comprises 1170 residues: MFFYLSKKIAVPNNVKLKCISWNKDQGFIACGGEDGLLKVLRLETQTDDSKLRGLAAPSNLSMNQNLEGHSGAVQVVTWNEQYQKLTTSDQNGLIIVWMLYKGSWYEEMINNRNKSVVRSMSWNADGQKICIVYEDGAVIVGSVDGNRIWGKDLKGIQLCHVTWSADSKILLFGMANGEIHIYDNQGNFIMKMKLNCLVNVTGAISIAGIHWYHGTEGYVEPDCPCLAICFDNGRCQIMRHENDQNPVLIDTGMYVVGIQWNHIGSVLAVAGSQKVVTQDKDVNIVQFYTPFGEHLGTLKVPGKQMCSLSWEGGGLKIALAVDSFIYFANIRPDYKWGYCSNTVVYAYTRPDRPEYCVVFWDTKNNEKYVKYVKSLISITTCGDFCILATKADENHPQFVLVLCNSIGTPLDPKYIDLVPLFVAMTKTHVIAASKEALYTWQYRVAKKLTALEINQITRSRKEGRERIYHVDDVPSGSVDGVFDYSKAIQGTRDPICAITASDKTLIVGRESGVIQRYSFPNVALIQKYSLDCRACQLSLNCNSSRLAIIDIAGVLTFFDLDTRVTDSTGQQVVGELLKLERKDVWDMKWAKDNPDLFAMMEKTRMYVFRNLDPEEPIQTSGYICNFEDLEIKSVLLDEILKNPEHPSKDYIMNFEIRSLRDSRALIEKVGIEDASQFIEDNPHPRLWRLLAEAALQKLDLYTAQQAFVRCKDYQGIKFVKRLGNLQSESMKQAEVIAYFGRFEEAERMYLDMDRRDLAIGLRLKLGDWFRVLQLLKTGSGDADDSLLEQAHNAIGDYFADRQKWMNAVQYYVKGRNQERLAECYYMLEDYEGLENLANSLPENHKLLPEIAQMFVRVGMCEQAVSAFLKCNQPKAAVDTCVHLNQWNKAVELAKSHSMKEIGSLLARYASHLLEKNKTLDAIELYRKASYFFDAAKLMYKIADEEAKKRTKPLRVKKLYVLSALLIEQYHEQMKNAQRGKVKGKNSEATSALAGLLEEEVLSTTSRFTDNAWRGAEAYHFFILAQRQLYEGYVDTALKTALHLRDYEDIIPSVEIYSLLALCACASRAFGTCSKAFIKLESLETLSAEQKQQYEDLALEIFTKHTPKDNRKSELNSLLEGGEGKLPTCIATGSPIIEYQFWVCKVCKHYVLAQEISNYNFCPLCHSSVE.

5 WD repeats span residues 12 to 51, 69 to 108, 113 to 152, 154 to 193, and 491 to 528; these read PNNVKLKCISWNKDQGFIACGGEDGLLKVLRLETQTDDSK, GHSGAVQVVTWNEQYQKLTTSDQNGLIIVWMLYKGSWYEE, RNKSVVRSMSWNADGQKICIVYEDGAVIVGSVDGNRIWGK, LKGIQLCHVTWSADSKILLFGMANGEIHIYDNQGNFIMKM, and GTRDPICAITASDKTLIVGRESGVIQRYSFPNVALIQK.

In terms of assembly, component of the IFT complex A (IFT-A) complex. IFT-A complex is divided into a core subcomplex composed of IFT122:IFT140:WDR19 which is associated with TULP3 and a peripheral subcomplex composed of IFT43:WDR35:TTC21B. Interacts directy with IFT122, ITF43 and TTC21B. Interacts with IFT43. Interacts with CFAP61. In terms of tissue distribution, expressed at high levels in testis and at lower levels in the brain (at protein level). Also present in other tissues, including heart, uterus, spinal cord, ovary, liver, kidney, lung, pancreas and stomach.

It is found in the cytoplasm. It localises to the cytoskeleton. Its subcellular location is the microtubule organizing center. The protein resides in the centrosome. The protein localises to the cilium axoneme. It is found in the cilium basal body. Functionally, as a component of the IFT complex A (IFT-A), a complex required for retrograde ciliary transport and entry into cilia of G protein-coupled receptors (GPCRs), it is involved in ciliogenesis and ciliary protein trafficking. May promote CASP3 activation and TNF-stimulated apoptosis. The chain is WD repeat-containing protein 35 (Wdr35) from Rattus norvegicus (Rat).